The primary structure comprises 484 residues: RNA polymerase sigma-54 factor 1 (484 aa).

The H-T-H motif DNA-binding region spans 355 to 374 (NLKAVAEAIQMHESTVSRVT). Residues 444–452 (ARRTVAKYR) carry the RPON box motif. Residues 464-484 (RRDNMWSTMNSRASGGTGLDK) form a disordered region. The span at 468-477 (MWSTMNSRAS) shows a compositional bias: polar residues.

It belongs to the sigma-54 factor family.

Functionally, sigma factors are initiation factors that promote the attachment of RNA polymerase to specific initiation sites and are then released. This sigma factor is responsible for the expression of the nitrogen fixation genes. This chain is RNA polymerase sigma-54 factor 1 (rpoN1), found in Bradyrhizobium diazoefficiens (strain JCM 10833 / BCRC 13528 / IAM 13628 / NBRC 14792 / USDA 110).